Reading from the N-terminus, the 155-residue chain is Small ribosomal subunit protein uS7 (155 aa).

It belongs to the universal ribosomal protein uS7 family. As to quaternary structure, part of the 30S ribosomal subunit. Contacts proteins S9 and S11.

One of the primary rRNA binding proteins, it binds directly to 16S rRNA where it nucleates assembly of the head domain of the 30S subunit. Is located at the subunit interface close to the decoding center, probably blocks exit of the E-site tRNA. The polypeptide is Small ribosomal subunit protein uS7 (Pelodictyon phaeoclathratiforme (strain DSM 5477 / BU-1)).